A 282-amino-acid polypeptide reads, in one-letter code: ATP synthase gamma chain (282 aa).

This sequence belongs to the ATPase gamma chain family. As to quaternary structure, F-type ATPases have 2 components, CF(1) - the catalytic core - and CF(0) - the membrane proton channel. CF(1) has five subunits: alpha(3), beta(3), gamma(1), delta(1), epsilon(1). CF(0) has three main subunits: a, b and c.

The protein localises to the cell inner membrane. Its function is as follows. Produces ATP from ADP in the presence of a proton gradient across the membrane. The gamma chain is believed to be important in regulating ATPase activity and the flow of protons through the CF(0) complex. The polypeptide is ATP synthase gamma chain (Fusobacterium nucleatum subsp. nucleatum (strain ATCC 25586 / DSM 15643 / BCRC 10681 / CIP 101130 / JCM 8532 / KCTC 2640 / LMG 13131 / VPI 4355)).